The following is a 199-amino-acid chain: Single-stranded DNA-binding protein 2 (199 aa).

One can recognise an SSB domain in the interval 1-110 (MAGETVITVV…LDVDEVGASL (110 aa)). Residues 114 to 199 (TAKVTKTSGQ…GGGYSDEPPF (86 aa)) are disordered. The segment covering 123–156 (QGRGGQGGYGGGGGGQGGGGWGGGPGGGQQGGGA) has biased composition (gly residues). Low complexity predominate over residues 157–166 (PADDPWATGG). Gly residues predominate over residues 167 to 193 (APAGGQQGGGGQGGGGWGGGSGGGGGY).

As to quaternary structure, homotetramer. Phosphorylated on tyrosine residue(s) when expressed in E.coli.

It localises to the cytoplasm. The protein resides in the nucleoid. This Streptomyces coelicolor (strain ATCC BAA-471 / A3(2) / M145) protein is Single-stranded DNA-binding protein 2 (ssb2).